We begin with the raw amino-acid sequence, 338 residues long: Putative peptide import ATP-binding protein BMEII0863 (338 aa).

The 254-residue stretch at 10–263 (KGLRTVFRTR…PRHPYTMGLL (254 aa)) folds into the ABC transporter domain. 43 to 50 (GESGSGKS) is an ATP binding site.

It belongs to the ABC transporter superfamily. The complex is composed of two ATP-binding proteins (BMEII0863 and BMEII0864), two transmembrane proteins (BMEII0860 and BMEII0861) and a solute-binding protein (BMEII0859).

It is found in the cell inner membrane. Functionally, probably part of an ABC transporter complex that could be involved in peptide import. Probably responsible for energy coupling to the transport system. In Brucella melitensis biotype 1 (strain ATCC 23456 / CCUG 17765 / NCTC 10094 / 16M), this protein is Putative peptide import ATP-binding protein BMEII0863.